The following is a 550-amino-acid chain: Glucagon-like peptide 2 receptor (550 aa).

The Extracellular portion of the chain corresponds to 1–173; that stretch reads MRPQPSPAVP…SFRQNVDHYA (173 aa). 3 cysteine pairs are disulfide-bonded: Cys-83–Cys-105, Cys-96–Cys-137, and Cys-118–Cys-159. N-linked (GlcNAc...) asparagine glycans are attached at residues Asn-97, Asn-113, Asn-148, and Asn-162. Residues 174–198 form a helical membrane-spanning segment; it reads LLYTLQLMYTVGYSVSLISLFLALT. At 199-210 the chain is on the cytoplasmic side; it reads LFLFLRKLHCTR. A helical transmembrane segment spans residues 211-235; that stretch reads NYIHMNLFASFILKVLAVLVKDMVS. The Extracellular portion of the chain corresponds to 236-261; sequence HNSYSKRPDDESGWMSYLSETSVSCR. The chain crosses the membrane as a helical span at residues 262–285; it reads SVQVLLHYFVGTNHLWLLVEGLYL. At 286–299 the chain is on the cytoplasmic side; it reads HTLLEPTVFPERRL. A helical membrane pass occupies residues 300 to 321; that stretch reads WPKYLVVGWAFPMLFVIPWGFA. At 322 to 339 the chain is on the extracellular side; it reads RAHLENTRCWATNGNLKI. The chain crosses the membrane as a helical span at residues 340 to 362; that stretch reads WWIIRGPMLLCVTVNFFIFLKIL. Residues 363-386 lie on the Cytoplasmic side of the membrane; that stretch reads KLLISKLKAHQMCFRDYKYRLAKS. The helical transmembrane segment at 387–405 threads the bilayer; sequence TLLLIPLLGVHEVLFTFFP. At 406–417 the chain is on the extracellular side; that stretch reads DDQVQGFSKRIR. Residues 418 to 438 traverse the membrane as a helical segment; it reads LFIQLTLSSVHGFLVALQYGF. Over 439-550 the chain is Cytoplasmic; the sequence is ANGEVKAELR…MEEILEESEI (112 aa).

It belongs to the G-protein coupled receptor 2 family.

The protein localises to the cell membrane. Its function is as follows. This is a receptor for glucagon-like peptide 2. The activity of this receptor is mediated by G proteins which activate adenylyl cyclase. This chain is Glucagon-like peptide 2 receptor (Glp2r), found in Rattus norvegicus (Rat).